A 410-amino-acid polypeptide reads, in one-letter code: Exodeoxyribonuclease 7 large subunit (410 aa).

The protein belongs to the XseA family. As to quaternary structure, heterooligomer composed of large and small subunits.

The protein resides in the cytoplasm. It carries out the reaction Exonucleolytic cleavage in either 5'- to 3'- or 3'- to 5'-direction to yield nucleoside 5'-phosphates.. In terms of biological role, bidirectionally degrades single-stranded DNA into large acid-insoluble oligonucleotides, which are then degraded further into small acid-soluble oligonucleotides. In Alkaliphilus metalliredigens (strain QYMF), this protein is Exodeoxyribonuclease 7 large subunit.